A 169-amino-acid polypeptide reads, in one-letter code: uncharacterized protein (169 aa).

The region spanning 18–79 (LDRADVALLN…IVSPKAVGRP (62 aa)) is the HTH asnC-type domain. The H-T-H motif DNA-binding region spans 37–56 (SEELADKVGLSPTACQRRLK).

This is an uncharacterized protein from Sinorhizobium fredii (strain NBRC 101917 / NGR234).